Reading from the N-terminus, the 85-residue chain is Small ribosomal subunit protein bS18 (85 aa).

It belongs to the bacterial ribosomal protein bS18 family. Part of the 30S ribosomal subunit. Forms a tight heterodimer with protein bS6.

Binds as a heterodimer with protein bS6 to the central domain of the 16S rRNA, where it helps stabilize the platform of the 30S subunit. This chain is Small ribosomal subunit protein bS18, found in Helicobacter acinonychis (strain Sheeba).